Consider the following 173-residue polypeptide: Ribosome maturation factor RimM (173 aa).

One can recognise a PRC barrel domain in the interval 96 to 169; it reads PDEYYDHQLE…LVEIDPPEGL (74 aa).

This sequence belongs to the RimM family. Binds ribosomal protein uS19.

It localises to the cytoplasm. Its function is as follows. An accessory protein needed during the final step in the assembly of 30S ribosomal subunit, possibly for assembly of the head region. Essential for efficient processing of 16S rRNA. May be needed both before and after RbfA during the maturation of 16S rRNA. It has affinity for free ribosomal 30S subunits but not for 70S ribosomes. This chain is Ribosome maturation factor RimM, found in Mycobacterium sp. (strain JLS).